The primary structure comprises 258 residues: Ubiquinone/menaquinone biosynthesis C-methyltransferase UbiE (258 aa).

Residues threonine 81, aspartate 102, and 130–131 each bind S-adenosyl-L-methionine; that span reads NA.

It belongs to the class I-like SAM-binding methyltransferase superfamily. MenG/UbiE family.

The enzyme catalyses a 2-demethylmenaquinol + S-adenosyl-L-methionine = a menaquinol + S-adenosyl-L-homocysteine + H(+). The catalysed reaction is a 2-methoxy-6-(all-trans-polyprenyl)benzene-1,4-diol + S-adenosyl-L-methionine = a 5-methoxy-2-methyl-3-(all-trans-polyprenyl)benzene-1,4-diol + S-adenosyl-L-homocysteine + H(+). It functions in the pathway quinol/quinone metabolism; menaquinone biosynthesis; menaquinol from 1,4-dihydroxy-2-naphthoate: step 2/2. It participates in cofactor biosynthesis; ubiquinone biosynthesis. Its function is as follows. Methyltransferase required for the conversion of demethylmenaquinol (DMKH2) to menaquinol (MKH2) and the conversion of 2-polyprenyl-6-methoxy-1,4-benzoquinol (DDMQH2) to 2-polyprenyl-3-methyl-6-methoxy-1,4-benzoquinol (DMQH2). This Allorhizobium ampelinum (strain ATCC BAA-846 / DSM 112012 / S4) (Agrobacterium vitis (strain S4)) protein is Ubiquinone/menaquinone biosynthesis C-methyltransferase UbiE.